Consider the following 204-residue polypeptide: Sperm acrosome developmental regulator (204 aa).

Residue Ser-65 is modified to Phosphoserine. A compositionally biased stretch (basic residues) spans 172–184; sequence RRQERRRRHHLRA. The tract at residues 172–204 is disordered; that stretch reads RRQERRRRHHLRAHMGPQPDPAQGLKQDARSPL.

The protein resides in the cytoplasmic vesicle. The protein localises to the secretory vesicle. It is found in the acrosome. May play an important role in acrosome formation and nucleus shaping during spermiogenesis. The protein is Sperm acrosome developmental regulator (SPACDR) of Bos taurus (Bovine).